The primary structure comprises 586 residues: MEKIQAEKSQSAIEFKNIVVDFGESIAIDNINLTVKKKELVTLLGPSGCGKTTSLSVIAGLIAPTSGQVLFNGYDVTKKPPQQRKLGLVFQNYALYPHMSVFENIVFPLYSDTSWREAIFEKNTWAQHDINCLILKANGATSEELAELNRLMQQRIDEPKRMAYQINDLMVSVFQKQSELEANLKLIPRKKQFAIISLSKETLSQIRDVETKAKAALETADSAEVEQTIKSELKQKLSEIKANYHDEKANIKAYWWEMLANIKTELKTEKTAIKQTNDYAKLKELKWKIHFEPLNLKKQYRSYFKQLKAKYSLKDGNLTESELSQIEELQKRIVSLKDFINRTAKEVAEKLEITKILHKRPANISGGQQQRVAIARAIVRRPKVLLMDEPLSNLDAKLRVQTRQWIRKFQQDLQITTVFVTHDQEEAMSISDTIVCMSTGKVQQIGSPSELYLKPANEFVATFLGSPEMNIVNATVKAGQLLWNENPLVKTKFDLPDGAIRVGFRYDEVTAPKNDGSPVFSGTLISVENLGKHMVGVVESNGVQLNVRLELSHQFEVGNAVKFTIKPNGLHFFDPQTTQRVEVKHV.

The region spanning 13-464 (IEFKNIVVDF…PANEFVATFL (452 aa)) is the ABC transporter domain. Position 45-52 (45-52 (GPSGCGKT)) interacts with ATP.

Belongs to the ABC transporter superfamily.

The chain is Putative ABC transporter ATP-binding protein MG187 homolog from Mycoplasma pneumoniae (strain ATCC 29342 / M129 / Subtype 1) (Mycoplasmoides pneumoniae).